A 355-amino-acid polypeptide reads, in one-letter code: Uroporphyrinogen decarboxylase (355 aa).

Substrate contacts are provided by residues 27–31 (RQAGR), D78, Y155, S210, and H328.

Belongs to the uroporphyrinogen decarboxylase family. As to quaternary structure, homodimer.

The protein resides in the cytoplasm. The catalysed reaction is uroporphyrinogen III + 4 H(+) = coproporphyrinogen III + 4 CO2. The protein operates within porphyrin-containing compound metabolism; protoporphyrin-IX biosynthesis; coproporphyrinogen-III from 5-aminolevulinate: step 4/4. In terms of biological role, catalyzes the decarboxylation of four acetate groups of uroporphyrinogen-III to yield coproporphyrinogen-III. The sequence is that of Uroporphyrinogen decarboxylase from Ectopseudomonas mendocina (strain ymp) (Pseudomonas mendocina).